Reading from the N-terminus, the 366-residue chain is MNKVVLLCRPGFEKECAAEITDKAGKREIFGFARVKENAGYVIYECYQPEDGEKLISELPFSSLIFARQWFVVGELLQHLPPEDRITPIVGMLQGVVEKGGELRVEVADTNESKELMKFCRKFTVPLRAALRDAGVLTNYETPKRPVVHVFFIAPGCCYTGYSFAHNNSPFYMGIPRLKFPSDAPSRSTLKLEEALHVFIPEDEWDERLANGMYAVDLGACPGGWTYQLVKRNMWVYSVDNGPMAQSLMDTGQVTWLREDGFRYRPNRNNISWMVCDMVEKPAKVTALMAQWLVNGWCRETIFNLKLPMKKRYEEVSHNLAYLQAQLDEHGVNAQIQARQLYHDREEVTVHVRRLWAAVGGSRDER.

S-adenosyl-L-methionine is bound by residues Ser-188, 221–224 (CPGG), Asp-240, Asp-260, and Asp-277. The active-site Proton acceptor is the Lys-306.

The protein belongs to the class I-like SAM-binding methyltransferase superfamily. RNA methyltransferase RlmE family. RlmM subfamily. In terms of assembly, monomer.

It localises to the cytoplasm. It catalyses the reaction cytidine(2498) in 23S rRNA + S-adenosyl-L-methionine = 2'-O-methylcytidine(2498) in 23S rRNA + S-adenosyl-L-homocysteine + H(+). Its function is as follows. Catalyzes the 2'-O-methylation at nucleotide C2498 in 23S rRNA. The chain is Ribosomal RNA large subunit methyltransferase M from Salmonella gallinarum (strain 287/91 / NCTC 13346).